Consider the following 611-residue polypeptide: Probable methyltransferase PMT1 (611 aa).

Topologically, residues 1–11 are cytoplasmic; sequence MRGRSEGGKKK. A helical; Signal-anchor for type II membrane protein transmembrane segment spans residues 12–32; it reads PVIVLLCVASVVLVFVYLFFG. Residues 33–611 are Lumenal-facing; that stretch reads SSNHKAIEYG…LTSESLRDLE (579 aa). A glycan (N-linked (GlcNAc...) asparagine) is linked at Asn345.

The protein belongs to the methyltransferase superfamily.

The protein resides in the golgi apparatus membrane. The protein is Probable methyltransferase PMT1 of Arabidopsis thaliana (Mouse-ear cress).